Consider the following 134-residue polypeptide: Lymphocyte antigen 6A-2/6E-1 (134 aa).

The signal sequence occupies residues 1–26; it reads MDTSHTTKSCLLILLVALLCAERAQG. The UPAR/Ly6 domain maps to 27-119; that stretch reads LECYQCYGVP…NGGSTWTMAG (93 aa). Cystine bridges form between C29-C53, C32-C41, C46-C74, C78-C98, and C99-C104. G112 is lipidated: GPI-anchor amidated glycine. Residues 113–134 constitute a propeptide, removed in mature form; that stretch reads STWTMAGVLLFSLSSVLLQTLL.

Post-translationally, O-glycosylated. Not N-glycosylated. In terms of processing, not phosphorylated. In terms of tissue distribution, widely expressed.

The protein resides in the cell membrane. Functionally, T-cell activation. In Mus musculus (Mouse), this protein is Lymphocyte antigen 6A-2/6E-1 (Ly6a).